A 513-amino-acid chain; its full sequence is L-threonine dehydratase biosynthetic IlvA (513 aa).

K63 carries the N6-(pyridoxal phosphate)lysine modification. Pyridoxal 5'-phosphate contacts are provided by residues N90, G189 to L193, and S316. ACT-like domains follow at residues A340–D411 and R433–K504.

This sequence belongs to the serine/threonine dehydratase family. Homotetramer. Requires pyridoxal 5'-phosphate as cofactor.

The enzyme catalyses L-threonine = 2-oxobutanoate + NH4(+). It participates in amino-acid biosynthesis; L-isoleucine biosynthesis; 2-oxobutanoate from L-threonine: step 1/1. Catalyzes the anaerobic formation of alpha-ketobutyrate and ammonia from threonine in a two-step reaction. The first step involved a dehydration of threonine and a production of enamine intermediates (aminocrotonate), which tautomerizes to its imine form (iminobutyrate). Both intermediates are unstable and short-lived. The second step is the nonenzymatic hydrolysis of the enamine/imine intermediates to form 2-ketobutyrate and free ammonia. In the low water environment of the cell, the second step is accelerated by RidA. The chain is L-threonine dehydratase biosynthetic IlvA (ilvA) from Haemophilus influenzae (strain ATCC 51907 / DSM 11121 / KW20 / Rd).